A 190-amino-acid chain; its full sequence is Lipocalin Can f 6.0101 (190 aa).

An N-terminal signal peptide occupies residues 1-15 (MKLLLLCLGLILVHA). The igE-binding stretch occupies residues 43–54 (SDIKEKIEENGS). Residues N52 and N67 are each glycosylated (N-linked (GlcNAc...) asparagine). Residues 76–83 (TKVNGKCT) form an igE-binding region. C82 and C175 are disulfide-bonded. N-linked (GlcNAc...) asparagine glycosylation is present at N90. Residues 91–97 (KTEKDGE) are igE-binding. The no IgE-binding stretch occupies residues 100–109 (VVHDGYNLFR). IgE-binding regions lie at residues 125–132 (NVNQEQEF) and 139–152 (GRKP…KEKF).

This sequence belongs to the calycin superfamily. Lipocalin family. In terms of assembly, monomer. In terms of tissue distribution, expressed in saliva (at protein level). Expressed in dander (at protein level). According to PubMed:22104604, expressed in submaxillary gland. In contrast, according to PubMed:22515174, not expressed in submaxillary gland. Expressed in bladder and skin, but not in tongue.

The protein resides in the secreted. In Canis lupus familiaris (Dog), this protein is Lipocalin Can f 6.0101.